The sequence spans 111 residues: UPF0145 protein BRADO6695 (111 aa).

Belongs to the UPF0145 family.

In Bradyrhizobium sp. (strain ORS 278), this protein is UPF0145 protein BRADO6695.